Here is a 754-residue protein sequence, read N- to C-terminus: 1,4-alpha-glucan branching enzyme GlgB (754 aa).

Asp431 serves as the catalytic Nucleophile. Glu484 acts as the Proton donor in catalysis.

The protein belongs to the glycosyl hydrolase 13 family. GlgB subfamily. In terms of assembly, monomer.

The catalysed reaction is Transfers a segment of a (1-&gt;4)-alpha-D-glucan chain to a primary hydroxy group in a similar glucan chain.. It participates in glycan biosynthesis; glycogen biosynthesis. In terms of biological role, catalyzes the formation of the alpha-1,6-glucosidic linkages in glycogen by scission of a 1,4-alpha-linked oligosaccharide from growing alpha-1,4-glucan chains and the subsequent attachment of the oligosaccharide to the alpha-1,6 position. The chain is 1,4-alpha-glucan branching enzyme GlgB from Prochlorococcus marinus (strain MIT 9215).